The following is a 458-amino-acid chain: Exodeoxyribonuclease 7 large subunit (458 aa).

This sequence belongs to the XseA family. Heterooligomer composed of large and small subunits.

The protein localises to the cytoplasm. The enzyme catalyses Exonucleolytic cleavage in either 5'- to 3'- or 3'- to 5'-direction to yield nucleoside 5'-phosphates.. In terms of biological role, bidirectionally degrades single-stranded DNA into large acid-insoluble oligonucleotides, which are then degraded further into small acid-soluble oligonucleotides. The protein is Exodeoxyribonuclease 7 large subunit of Escherichia coli O81 (strain ED1a).